The sequence spans 108 residues: Parvalbumin beta (108 aa).

Alanine 1 is modified (N-acetylalanine). A disulfide bond links cysteine 11 and cysteine 33. 2 consecutive EF-hand domains span residues 38-73 (KSAD…FKAG) and 77-108 (LTDA…LVKA). Positions 51, 53, 55, 57, 59, 62, 90, 92, 94, 96, and 101 each coordinate Ca(2+).

This sequence belongs to the parvalbumin family.

In terms of biological role, in muscle, parvalbumin is thought to be involved in relaxation after contraction. It binds two calcium ions. The polypeptide is Parvalbumin beta (Merlangius merlangus (Whiting)).